We begin with the raw amino-acid sequence, 107 residues long: Thioredoxin (107 aa).

Positions 2–107 (PSPIQVTDFS…TLTNALKKYL (106 aa)) constitute a Thioredoxin domain. Residues cysteine 32 and cysteine 35 each act as nucleophile in the active site. Cysteine 32 and cysteine 35 are oxidised to a cystine.

This sequence belongs to the thioredoxin family.

The protein localises to the plastid. It is found in the chloroplast. Participates in various redox reactions through the reversible oxidation of its active center dithiol to a disulfide and catalyzes dithiol-disulfide exchange reactions. This is Thioredoxin (trxA) from Cyanidium caldarium (Red alga).